The primary structure comprises 225 residues: Probable proteasome subunit beta type-6 (225 aa).

The protein belongs to the peptidase T1B family. The 26S proteasome consists of a 20S proteasome core and two 19S regulatory subunits. The 20S proteasome core is composed of 28 subunits that are arranged in four stacked rings, resulting in a barrel-shaped structure. The two end rings are each formed by seven alpha subunits, and the two central rings are each formed by seven beta subunits. The catalytic chamber with the active sites is on the inside of the barrel.

The protein resides in the cytoplasm. The protein localises to the nucleus. Functionally, non-catalytic component of the proteasome, a multicatalytic proteinase complex which is characterized by its ability to cleave peptides with Arg, Phe, Tyr, Leu, and Glu adjacent to the leaving group at neutral or slightly basic pH. The proteasome has an ATP-dependent proteolytic activity. In Schizosaccharomyces pombe (strain 972 / ATCC 24843) (Fission yeast), this protein is Probable proteasome subunit beta type-6 (pam1).